A 670-amino-acid chain; its full sequence is UvrABC system protein B (670 aa).

Residues 51-433 (EGLKKREQFQ…SARIVEQIIR (383 aa)) form the Helicase ATP-binding domain. 64–71 (GVTGSGKT) provides a ligand contact to ATP. A Beta-hairpin motif is present at residues 117-140 (YYDYYQPESYLPAKDQYIEKDAQI). The 160-residue stretch at 453 to 612 (DVMQEIRKIV…IVPKTIRKPI (160 aa)) folds into the Helicase C-terminal domain. The UVR domain maps to 631 to 666 (PNVIIELDAEMREAADRLDFERAIQLRELIKKLEKE).

Belongs to the UvrB family. In terms of assembly, forms a heterotetramer with UvrA during the search for lesions. Interacts with UvrC in an incision complex.

It localises to the cytoplasm. Its function is as follows. The UvrABC repair system catalyzes the recognition and processing of DNA lesions. A damage recognition complex composed of 2 UvrA and 2 UvrB subunits scans DNA for abnormalities. Upon binding of the UvrA(2)B(2) complex to a putative damaged site, the DNA wraps around one UvrB monomer. DNA wrap is dependent on ATP binding by UvrB and probably causes local melting of the DNA helix, facilitating insertion of UvrB beta-hairpin between the DNA strands. Then UvrB probes one DNA strand for the presence of a lesion. If a lesion is found the UvrA subunits dissociate and the UvrB-DNA preincision complex is formed. This complex is subsequently bound by UvrC and the second UvrB is released. If no lesion is found, the DNA wraps around the other UvrB subunit that will check the other stand for damage. This is UvrABC system protein B from Methanosarcina acetivorans (strain ATCC 35395 / DSM 2834 / JCM 12185 / C2A).